The chain runs to 238 residues: Aspartate/glutamate leucyltransferase (238 aa).

This sequence belongs to the R-transferase family. Bpt subfamily.

The protein resides in the cytoplasm. It catalyses the reaction N-terminal L-glutamyl-[protein] + L-leucyl-tRNA(Leu) = N-terminal L-leucyl-L-glutamyl-[protein] + tRNA(Leu) + H(+). The enzyme catalyses N-terminal L-aspartyl-[protein] + L-leucyl-tRNA(Leu) = N-terminal L-leucyl-L-aspartyl-[protein] + tRNA(Leu) + H(+). Its function is as follows. Functions in the N-end rule pathway of protein degradation where it conjugates Leu from its aminoacyl-tRNA to the N-termini of proteins containing an N-terminal aspartate or glutamate. This Nitrosococcus oceani (strain ATCC 19707 / BCRC 17464 / JCM 30415 / NCIMB 11848 / C-107) protein is Aspartate/glutamate leucyltransferase.